Consider the following 596-residue polypeptide: uncharacterized protein (596 aa).

Basic residues-rich tracts occupy residues 1–10 (MRLRSQKRGN) and 18–29 (KTRKGKGKKLKP). Residues 1–30 (MRLRSQKRGNKFVALPAKTRKGKGKKLKPK) are disordered.

This is an uncharacterized protein from Magallana gigas (Pacific oyster).